Reading from the N-terminus, the 369-residue chain is Dual-specificity RNA methyltransferase RlmN (369 aa).

Glutamate 94 serves as the catalytic Proton acceptor. In terms of domain architecture, Radical SAM core spans 113-346 (ESEKWTMCLS…CTIRESRGID (234 aa)). Cysteines 120 and 351 form a disulfide. Residues cysteine 127, cysteine 131, and cysteine 134 each coordinate [4Fe-4S] cluster. Residues 177–178 (GE), serine 209, 232–234 (SLH), and asparagine 308 each bind S-adenosyl-L-methionine. Cysteine 351 serves as the catalytic S-methylcysteine intermediate.

This sequence belongs to the radical SAM superfamily. RlmN family. The cofactor is [4Fe-4S] cluster.

The protein resides in the cytoplasm. The enzyme catalyses adenosine(2503) in 23S rRNA + 2 reduced [2Fe-2S]-[ferredoxin] + 2 S-adenosyl-L-methionine = 2-methyladenosine(2503) in 23S rRNA + 5'-deoxyadenosine + L-methionine + 2 oxidized [2Fe-2S]-[ferredoxin] + S-adenosyl-L-homocysteine. It carries out the reaction adenosine(37) in tRNA + 2 reduced [2Fe-2S]-[ferredoxin] + 2 S-adenosyl-L-methionine = 2-methyladenosine(37) in tRNA + 5'-deoxyadenosine + L-methionine + 2 oxidized [2Fe-2S]-[ferredoxin] + S-adenosyl-L-homocysteine. Functionally, specifically methylates position 2 of adenine 2503 in 23S rRNA and position 2 of adenine 37 in tRNAs. m2A2503 modification seems to play a crucial role in the proofreading step occurring at the peptidyl transferase center and thus would serve to optimize ribosomal fidelity. The protein is Dual-specificity RNA methyltransferase RlmN of Helicobacter hepaticus (strain ATCC 51449 / 3B1).